The following is a 397-amino-acid chain: Yellow-related salivary protein LJM111 (397 aa).

The first 18 residues, 1–18 (MKLFFFLYTFGLVQTIFG), serve as a signal peptide directing secretion.

This sequence belongs to the major royal jelly protein family. In terms of tissue distribution, salivary gland (at protein level).

Its subcellular location is the secreted. Probably modulates blood feeding of sand flies on vertebrate species by binding and sequestering different mediators involved in the host response. Binds biogenic amines. Binds adrenaline and noradrenaline with high affinity. Binds serotonin. Binds dopamine and octopamine. Exhibits anti-inflammatory effects in the host: reduces IL17A, TNF-alpha (TNF) and IFN-gamma (IFNG) production by host lymph node cells, suppresses expression of MHC-II and CD86, reduces TNF-alpha production and increases IL10 production, in host bone marrow-derived dendritic cells (BMDCs) stimulated by lipopolysaccharides. Reduces pain in mouse mechanical hypernociception model. The chain is Yellow-related salivary protein LJM111 from Lutzomyia longipalpis (Sand fly).